Consider the following 130-residue polypeptide: MAVSYNYGTGRRKTAVARVFIKPGSGNIVVNGKPVDEFFSRETGRMIVRQPLVLTENDSRFDIMVNVTGGGESGQAGAVRHGITRALIEYDAELKPVLRKAGFVTRDAREVERKKVGFRKARRRKQFSKR.

Belongs to the universal ribosomal protein uS9 family.

In Aromatoleum aromaticum (strain DSM 19018 / LMG 30748 / EbN1) (Azoarcus sp. (strain EbN1)), this protein is Small ribosomal subunit protein uS9.